We begin with the raw amino-acid sequence, 390 residues long: MSHNSFGHLFRVTTFGESHGPALGCVVDGCPPLIPLDAAEIQAELDRRRPGQSRFTTQRREPDAVRILSGVFADDRTGGRQLTTGTPIALMIENVDQRSKDYSDIRDTYRPGHADYTYEAKYGIRDYRGGGRSSARETAARVAAGAIARKVLPGVTIRGALVQMGPHAIDRARFDWAEVGNNPFFCPDAEAAARWAEVLDGVRKDGSSLGAVIEVVAEGVPPGLGAPVYGKLDADLAAAMMSINAVKGVEIGDGFAAAALRGEENADEMRPGHGGAPSFLANHAGGILGGISTGQAVVCRFAVKPTSSILTPRASVTRDNRPTDVLTRGRHDPCVGIRAVPVGEAMMACVLADHVLRHRGQVGAHPAGAHPAGADPAGTHPGGPGGFQPG.

Arginine 48 and arginine 54 together coordinate NADP(+). FMN is bound by residues 132–134 (RSS), 244–245 (NA), glycine 289, 304–308 (KPTSS), and arginine 330. The segment at 362-390 (VGAHPAGAHPAGADPAGTHPGGPGGFQPG) is disordered. A compositionally biased stretch (low complexity) spans 363 to 379 (GAHPAGAHPAGADPAGT). Positions 380–390 (HPGGPGGFQPG) are enriched in gly residues.

This sequence belongs to the chorismate synthase family. As to quaternary structure, homotetramer. The cofactor is FMNH2.

It catalyses the reaction 5-O-(1-carboxyvinyl)-3-phosphoshikimate = chorismate + phosphate. It functions in the pathway metabolic intermediate biosynthesis; chorismate biosynthesis; chorismate from D-erythrose 4-phosphate and phosphoenolpyruvate: step 7/7. Catalyzes the anti-1,4-elimination of the C-3 phosphate and the C-6 proR hydrogen from 5-enolpyruvylshikimate-3-phosphate (EPSP) to yield chorismate, which is the branch point compound that serves as the starting substrate for the three terminal pathways of aromatic amino acid biosynthesis. This reaction introduces a second double bond into the aromatic ring system. This Methylobacterium sp. (strain 4-46) protein is Chorismate synthase.